Consider the following 232-residue polypeptide: 2,3,4,5-tetrahydropyridine-2,6-dicarboxylate N-acetyltransferase (232 aa).

It belongs to the transferase hexapeptide repeat family. DapH subfamily.

The catalysed reaction is (S)-2,3,4,5-tetrahydrodipicolinate + acetyl-CoA + H2O = L-2-acetamido-6-oxoheptanedioate + CoA. Its pathway is amino-acid biosynthesis; L-lysine biosynthesis via DAP pathway; LL-2,6-diaminopimelate from (S)-tetrahydrodipicolinate (acetylase route): step 1/3. Its function is as follows. Catalyzes the transfer of an acetyl group from acetyl-CoA to tetrahydrodipicolinate. The polypeptide is 2,3,4,5-tetrahydropyridine-2,6-dicarboxylate N-acetyltransferase (Streptococcus mutans serotype c (strain ATCC 700610 / UA159)).